Here is a 107-residue protein sequence, read N- to C-terminus: Ribonuclease P protein component 4 (107 aa).

The Zn(2+) site is built by cysteine 66, cysteine 69, cysteine 92, and cysteine 95.

The protein belongs to the eukaryotic/archaeal RNase P protein component 4 family. In terms of assembly, consists of a catalytic RNA component and at least 4-5 protein subunits. Zn(2+) serves as cofactor.

Its subcellular location is the cytoplasm. The catalysed reaction is Endonucleolytic cleavage of RNA, removing 5'-extranucleotides from tRNA precursor.. Its function is as follows. Part of ribonuclease P, a protein complex that generates mature tRNA molecules by cleaving their 5'-ends. The protein is Ribonuclease P protein component 4 of Methanosarcina barkeri (strain Fusaro / DSM 804).